We begin with the raw amino-acid sequence, 146 residues long: Lipoprotein signal peptidase (146 aa).

3 helical membrane passes run Gly10–Phe30, Phe54–Leu74, and Phe80–Leu100. Residues Asp110 and Asp127 contribute to the active site. A helical transmembrane segment spans residues Phe118–Leu138.

This sequence belongs to the peptidase A8 family.

Its subcellular location is the cell inner membrane. The catalysed reaction is Release of signal peptides from bacterial membrane prolipoproteins. Hydrolyzes -Xaa-Yaa-Zaa-|-(S,diacylglyceryl)Cys-, in which Xaa is hydrophobic (preferably Leu), and Yaa (Ala or Ser) and Zaa (Gly or Ala) have small, neutral side chains.. The protein operates within protein modification; lipoprotein biosynthesis (signal peptide cleavage). In terms of biological role, this protein specifically catalyzes the removal of signal peptides from prolipoproteins. This chain is Lipoprotein signal peptidase, found in Wolinella succinogenes (strain ATCC 29543 / DSM 1740 / CCUG 13145 / JCM 31913 / LMG 7466 / NCTC 11488 / FDC 602W) (Vibrio succinogenes).